Consider the following 260-residue polypeptide: Phosphoribosylaminoimidazole-succinocarboxamide synthase (260 aa).

Belongs to the SAICAR synthetase family.

It catalyses the reaction 5-amino-1-(5-phospho-D-ribosyl)imidazole-4-carboxylate + L-aspartate + ATP = (2S)-2-[5-amino-1-(5-phospho-beta-D-ribosyl)imidazole-4-carboxamido]succinate + ADP + phosphate + 2 H(+). It participates in purine metabolism; IMP biosynthesis via de novo pathway; 5-amino-1-(5-phospho-D-ribosyl)imidazole-4-carboxamide from 5-amino-1-(5-phospho-D-ribosyl)imidazole-4-carboxylate: step 1/2. The sequence is that of Phosphoribosylaminoimidazole-succinocarboxamide synthase from Pelagibacter ubique (strain HTCC1062).